Here is a 124-residue protein sequence, read N- to C-terminus: Hydrogenase maturation factor HypA (124 aa).

Position 2 (His2) interacts with Ni(2+). The Zn(2+) site is built by Cys78, Cys81, Cys97, and Cys100.

The protein belongs to the HypA/HybF family.

Functionally, involved in the maturation of [NiFe] hydrogenases. Required for nickel insertion into the metal center of the hydrogenase. This Methanococcus vannielii (strain ATCC 35089 / DSM 1224 / JCM 13029 / OCM 148 / SB) protein is Hydrogenase maturation factor HypA.